The sequence spans 369 residues: Adenosine 3'-phospho 5'-phosphosulfate transporter 2 (369 aa).

A glycan (N-linked (GlcNAc...) asparagine) is linked at asparagine 39. Helical transmembrane passes span 46–66, 79–99, 115–135, 138–158, 168–188, and 191–211; these read LTQF…YGYL, YGWY…LIEL, MLIA…LGYL, PTQV…GVFI, VSAA…DSTI, and NFNL…AVIG. N-linked (GlcNAc...) asparagine glycosylation is present at asparagine 222. 4 consecutive transmembrane segments (helical) span residues 235 to 255, 266 to 285, 292 to 314, and 317 to 337; these read IGFV…PAVA, GYAF…VLAL, LLAV…LFFA, and FTFQ…LNVY.

It belongs to the nucleotide-sugar transporter family. SLC35B subfamily.

It localises to the golgi apparatus membrane. It catalyses the reaction 3'-phosphoadenylyl sulfate(in) + adenosine 3',5'-bisphosphate(out) = 3'-phosphoadenylyl sulfate(out) + adenosine 3',5'-bisphosphate(in). Its function is as follows. Probably functions as a 3'-phosphoadenylyl sulfate:adenosine 3',5'-bisphosphate antiporter at the Golgi membranes. Mediates the transport from the cytosol into the lumen of the Golgi of 3'-phosphoadenylyl sulfate/adenosine 3'-phospho 5'-phosphosulfate (PAPS), a universal sulfuryl donor for sulfation events that take place in that compartment. In Mus musculus (Mouse), this protein is Adenosine 3'-phospho 5'-phosphosulfate transporter 2.